Reading from the N-terminus, the 237-residue chain is Lipoprotein-releasing system ATP-binding protein LolD (237 aa).

In terms of domain architecture, ABC transporter spans 8–236 (ISVTDLRKTF…EAIKKSVKTA (229 aa)). 40 to 47 (GKSGSGKS) is a binding site for ATP.

This sequence belongs to the ABC transporter superfamily. Lipoprotein translocase (TC 3.A.1.125) family. As to quaternary structure, the complex is composed of two ATP-binding proteins (LolD) and two transmembrane proteins (LolC and LolE).

It is found in the cell inner membrane. Functionally, part of the ABC transporter complex LolCDE involved in the translocation of mature outer membrane-directed lipoproteins, from the inner membrane to the periplasmic chaperone, LolA. Responsible for the formation of the LolA-lipoprotein complex in an ATP-dependent manner. The protein is Lipoprotein-releasing system ATP-binding protein LolD of Leptospira interrogans serogroup Icterohaemorrhagiae serovar Lai (strain 56601).